Consider the following 345-residue polypeptide: Mycothiol acetyltransferase (345 aa).

N-acetyltransferase domains follow at residues Asp-6–Glu-149 and Phe-164–Leu-345. 1D-myo-inositol 2-(L-cysteinylamino)-2-deoxy-alpha-D-glucopyranoside is bound at residue Glu-39. Residue Leu-76–Val-78 participates in acetyl-CoA binding. 1D-myo-inositol 2-(L-cysteinylamino)-2-deoxy-alpha-D-glucopyranoside contacts are provided by Glu-198, Lys-261, and Glu-277. Residues Val-281 to Leu-283 and Arg-288 to Gln-294 contribute to the acetyl-CoA site. Residue Tyr-315 participates in 1D-myo-inositol 2-(L-cysteinylamino)-2-deoxy-alpha-D-glucopyranoside binding.

The protein belongs to the acetyltransferase family. MshD subfamily. As to quaternary structure, monomer.

It catalyses the reaction 1D-myo-inositol 2-(L-cysteinylamino)-2-deoxy-alpha-D-glucopyranoside + acetyl-CoA = mycothiol + CoA + H(+). In terms of biological role, catalyzes the transfer of acetyl from acetyl-CoA to desacetylmycothiol (Cys-GlcN-Ins) to form mycothiol. The protein is Mycothiol acetyltransferase of Corynebacterium jeikeium (strain K411).